A 299-amino-acid polypeptide reads, in one-letter code: Neomycin C epimerase (299 aa).

Positions 10 to 222 (PVRQVRAYRN…WNHIFETGRR (213 aa)) constitute a Radical SAM core domain. Residues Cys-26, Cys-30, Cys-33, Cys-226, and Cys-247 each coordinate [4Fe-4S] cluster. The active-site Proton donor is the Cys-249. Cys-271 and Cys-274 together coordinate [4Fe-4S] cluster.

It belongs to the radical SAM superfamily. The cofactor is [4Fe-4S] cluster.

The catalysed reaction is neomycin C + AH2 + S-adenosyl-L-methionine = neomycin B + 5'-deoxyadenosine + L-methionine + A + H(+). The protein operates within antibiotic biosynthesis; neomycin biosynthesis. Catalyzes the last step of neomycin B biosynthesis, i.e. the irreversible epimerization at C-5''' of neomycin C to give neomycin B. To a lesser extent, is also able to convert neomycin Y2 to neomycin Y1. In Streptomyces fradiae (Streptomyces roseoflavus), this protein is Neomycin C epimerase.